Here is a 2100-residue protein sequence, read N- to C-terminus: Autophagy-related protein 2 (2100 aa).

Disordered stretches follow at residues 101-129, 288-363, 410-492, 512-588, 674-694, 1474-1499, and 1969-1996; these read LPDKPEQNAPPTRSKGTAEDEGQDGHSVL, STVH…DSDD, IFPK…AVSQ, MSAM…HNSP, LPISRTKPTTQKHEDFDGLND, PSHGDSGPQGRGATTPRFGNEGSASA, and DFLNSPRGSPSRPSTSDGRWDDNGVDEG. Over residues 300–320 the composition is skewed to low complexity; sequence RPRSPQPSSSGSDSCGDMSRS. The span at 335–346 shows a compositional bias: basic and acidic residues; sequence VDSHGDESRHLE. A compositionally biased stretch (polar residues) spans 462 to 485; sequence DSATSARGKTPDCQTEQESPSTSK. Residues 512 to 522 show a composition bias toward low complexity; that stretch reads MSAMSQSSTTS. Basic and acidic residues-rich tracts occupy residues 535–546 and 555–565; these read KRIDTSDPDQKE and TEAKGASHDFD. Residues 1973 to 1985 are compositionally biased toward low complexity; sequence SPRGSPSRPSTSD. Residues 1986 to 1996 show a composition bias toward basic and acidic residues; that stretch reads GRWDDNGVDEG.

Belongs to the ATG2 family.

It localises to the preautophagosomal structure membrane. The protein localises to the endoplasmic reticulum membrane. It catalyses the reaction a 1,2-diacyl-sn-glycero-3-phosphocholine(in) = a 1,2-diacyl-sn-glycero-3-phosphocholine(out). It carries out the reaction a 1,2-diacyl-sn-glycero-3-phospho-L-serine(in) = a 1,2-diacyl-sn-glycero-3-phospho-L-serine(out). The enzyme catalyses a 1,2-diacyl-sn-glycero-3-phosphoethanolamine(in) = a 1,2-diacyl-sn-glycero-3-phosphoethanolamine(out). Its function is as follows. Lipid transfer protein required for autophagosome completion and peroxisome degradation. Tethers the edge of the isolation membrane (IM) to the endoplasmic reticulum (ER) and mediates direct lipid transfer from ER to IM for IM expansion. ATG2 binds to the ER exit site (ERES), which is the membrane source for autophagosome formation, using basic residues in its N-terminal region (NR) and to the expanding edge of the IM through its C-terminal region. The latter binding is assisted by an ATG18-PtdIns3P interaction. ATG2 then extracts phospholipids from the membrane source using its NR and transfers them to ATG9 to the IM through its predicted beta-sheet-rich structure for membrane expansion. This Coccidioides immitis (strain RS) (Valley fever fungus) protein is Autophagy-related protein 2 (ATG2).